Consider the following 199-residue polypeptide: Nucleoside triphosphate pyrophosphatase (199 aa).

D72 acts as the Proton acceptor in catalysis.

The protein belongs to the Maf family. Requires a divalent metal cation as cofactor.

It localises to the cytoplasm. It catalyses the reaction a ribonucleoside 5'-triphosphate + H2O = a ribonucleoside 5'-phosphate + diphosphate + H(+). It carries out the reaction a 2'-deoxyribonucleoside 5'-triphosphate + H2O = a 2'-deoxyribonucleoside 5'-phosphate + diphosphate + H(+). Functionally, nucleoside triphosphate pyrophosphatase. May have a dual role in cell division arrest and in preventing the incorporation of modified nucleotides into cellular nucleic acids. The polypeptide is Nucleoside triphosphate pyrophosphatase (Synechococcus elongatus (strain ATCC 33912 / PCC 7942 / FACHB-805) (Anacystis nidulans R2)).